The following is a 192-amino-acid chain: UPF0149 protein VIBHAR_03551 (192 aa).

The protein belongs to the UPF0149 family.

In Vibrio campbellii (strain ATCC BAA-1116), this protein is UPF0149 protein VIBHAR_03551.